The primary structure comprises 605 residues: Probable potassium transport system protein Kup 2 (605 aa).

Helical transmembrane passes span 17 to 37, 45 to 65, 96 to 116, 139 to 159, 169 to 189, 211 to 231, 246 to 266, 286 to 306, 338 to 358, 367 to 387, 394 to 414, and 417 to 437; these read GLVF…IMTL, VLGI…VEYA, MAFA…DGVI, AQGG…IFQF, FGPI…VSII, GLAG…GEAL, AWYF…AFIL, LYIP…QALI, IYIG…MILF, AYGL…TMIF, WKVP…TANL, and LPHG…IMVI.

The protein belongs to the HAK/KUP transporter (TC 2.A.72) family.

The protein localises to the cell inner membrane. The enzyme catalyses K(+)(in) + H(+)(in) = K(+)(out) + H(+)(out). Functionally, transport of potassium into the cell. Likely operates as a K(+):H(+) symporter. The polypeptide is Probable potassium transport system protein Kup 2 (Geobacter sulfurreducens (strain ATCC 51573 / DSM 12127 / PCA)).